The following is a 293-amino-acid chain: MQIRRRSPNPPVEVDTLRYQVKVPDGEPRHILEEIVWHKEKEVDRLRESLPLLELRKQVQHLPPPQDFLGAITQGKTQPALIAEVKKASPSKGVIREDFDPVAIAQAYVKGGASCLSVLTDAKFFQGSFENLALVRQSVDLPLLCKEFILYPYQIYLARTKGADAVLLIAAILSDRDLSYFLKIIQTLGMTALIEVHSLTELDRVLAIEGVSLIGINNRNLETFEVDLKTTSQLLAARRDKIQALGIKIISESGLHTPDDLQFVQQAGSDGVLIGESLVKQPDPTQAIANLFG.

This sequence belongs to the TrpC family.

The enzyme catalyses 1-(2-carboxyphenylamino)-1-deoxy-D-ribulose 5-phosphate + H(+) = (1S,2R)-1-C-(indol-3-yl)glycerol 3-phosphate + CO2 + H2O. It functions in the pathway amino-acid biosynthesis; L-tryptophan biosynthesis; L-tryptophan from chorismate: step 4/5. This Rippkaea orientalis (strain PCC 8801 / RF-1) (Cyanothece sp. (strain PCC 8801)) protein is Indole-3-glycerol phosphate synthase.